A 232-amino-acid polypeptide reads, in one-letter code: Uracil phosphoribosyltransferase (232 aa).

38 to 42 serves as a coordination point for GTP; it reads KGLVK. 5-phospho-alpha-D-ribose 1-diphosphate-binding positions include Arg87, Arg112, and 140–148; that span reads DPMIATGST. Residues Ile204 and 209 to 211 each bind uracil; that span reads GDA. Asp210 contributes to the 5-phospho-alpha-D-ribose 1-diphosphate binding site.

This sequence belongs to the UPRTase family. Mg(2+) is required as a cofactor.

The enzyme catalyses UMP + diphosphate = 5-phospho-alpha-D-ribose 1-diphosphate + uracil. It participates in pyrimidine metabolism; UMP biosynthesis via salvage pathway; UMP from uracil: step 1/1. Allosterically activated by GTP. Its function is as follows. Catalyzes the conversion of uracil and 5-phospho-alpha-D-ribose 1-diphosphate (PRPP) to UMP and diphosphate. The chain is Uracil phosphoribosyltransferase from Thermococcus sibiricus (strain DSM 12597 / MM 739).